The sequence spans 427 residues: Indole diterpene prenyltransferase idtF (427 aa).

Residues Arg-97, Lys-195, Arg-264, Lys-266, Tyr-268, and Tyr-352 each coordinate substrate.

This sequence belongs to the tryptophan dimethylallyltransferase family.

It participates in secondary metabolite biosynthesis. Indole diterpene prenyltransferase; part of the gene cluster that mediates the biosynthesis of paspalitrems, indole-diterpene (IDT) mycotoxins that are potent tremorgens in mammals. The geranylgeranyl diphosphate (GGPP) synthase idtG is proposed to catalyze the first step in IDT biosynthesis via catalysis of a series of iterative condensations of isopentenyl diphosphate (IPP) with dimethylallyl diphosphate (DMAPP), geranyl diphosphate (GPP), and farnesyl diphosphate (FPP), to form GGPP. Condensation of indole-3-glycerol phosphate with GGPP by the prenyltransferase idtC then forms 3-geranylgeranylindole (3-GGI). Epoxidation of the two terminal alkenes of the geranylgeranyl moiety by the FAD-dependent monooxygenase idtM, and cyclization by the terpene cyclase idtB then leads to the production of paspaline. The cytochrome P450 monooxygenase idtP then catalyzes oxidative elimination of the pendant methyl group at C-12 of paspaline and generates the C-10 ketone to yield 13-desoxypaxilline. The cytochrome P450 monooxygenase idtQ may catalyze the C-13 oxidation of 13-desoxypaxilline to afford paxilline. Considering that both paspalicine and paxilline were detected in C.paspali, idtQ also catalyzes the formation of paspalinine from 13-desoxypaxilline via paspalicine as an intermediate. Finally, the alpha-prenyltransferase idtF prenylates paspalinine at the C-20 or the C-21 positions to yield paspalitrems A and C, respectively. The hydroxylation of paspalitrem A at C-32 by a still unknown oxidase affords paspalitrem B. This chain is Indole diterpene prenyltransferase idtF, found in Claviceps paspali (Rye ergot fungus).